The sequence spans 382 residues: Lycopene beta-cyclase (382 aa).

6 to 36 (DLILVGAGLANGLIALRLQQQQPDMRILLID) contacts NAD(+).

Belongs to the lycopene cyclase family. It depends on FAD as a cofactor.

The protein resides in the cell inner membrane. It carries out the reaction a carotenoid psi-end group = a carotenoid beta-end derivative. The enzyme catalyses all-trans-lycopene = gamma-carotene. It catalyses the reaction gamma-carotene = all-trans-beta-carotene. The catalysed reaction is all-trans-neurosporene = beta-zeacarotene. It carries out the reaction beta-zeacarotene = 7,8-dihydro-beta-carotene. It functions in the pathway carotenoid biosynthesis; beta-carotene biosynthesis. Its activity is regulated as follows. Activity is increased in the presence of NAD(P)H. NADPH is not involved directly in the cyclization reaction, but must play an indirect role, e.g. as an allosteric activator. In terms of biological role, catalyzes the double cyclization reaction which converts lycopene to beta-carotene. Also catalyzes the double cyclization reaction which converts neurosporene to 7,8-dihydro-beta-carotene via monocyclic beta-zeacarotene. May also convert zeta-carotene to bicyclic 7,8,7',8'-tetrahydro-beta-carotene. The chain is Lycopene beta-cyclase from Pantoea ananas (Erwinia uredovora).